The following is a 145-amino-acid chain: Antiholin-like protein LrgA (145 aa).

A run of 4 helical transmembrane segments spans residues 10-30 (PAHF…SKII), 33-53 (FMPI…VLLC), 72-92 (NIGL…GVIS), and 96-116 (FLII…TGYV).

The protein belongs to the CidA/LrgA family. LrgA subfamily.

The protein resides in the cell membrane. In terms of biological role, inhibits the expression or activity of extracellular murein hydrolases by interacting, possibly with LrgB, with the holin-like proteins CidA and/or CidB. The LrgAB and CidAB proteins may affect the proton motive force of the membrane. May be involved in programmed cell death (PCD), possibly triggering PCD in response to antibiotics and environmental stresses. In Staphylococcus aureus (strain Mu3 / ATCC 700698), this protein is Antiholin-like protein LrgA.